Consider the following 384-residue polypeptide: Endoglucanase (384 aa).

An N-terminal signal peptide occupies residues 1 to 25; that stretch reads MTRRRLLHAGTLAGVAALLPAAALA. The active-site Proton donor is the Glu-63. Asp-124 functions as the Nucleophile in the catalytic mechanism.

It belongs to the glycosyl hydrolase 8 (cellulase D) family.

It is found in the secreted. The enzyme catalyses Endohydrolysis of (1-&gt;4)-beta-D-glucosidic linkages in cellulose, lichenin and cereal beta-D-glucans.. The protein operates within glycan metabolism; bacterial cellulose biosynthesis. Functionally, hydrolyzes carboxymethylcellulose. The chain is Endoglucanase (bcsZ) from Xanthomonas axonopodis pv. citri (strain 306).